A 117-amino-acid polypeptide reads, in one-letter code: MNKDESRQRRARQTRIRIAEAQANRLTVIRSNSHISAQVYSPCGTKVVAAASTMEKDLRQAIKNGSYAEAAKQIGKLVAERAVKAGVVDVAFDRSGHRYHGRIKALAEAAREAGLKF.

It belongs to the universal ribosomal protein uL18 family. In terms of assembly, part of the 50S ribosomal subunit; part of the 5S rRNA/L5/L18/L25 subcomplex. Contacts the 5S and 23S rRNAs.

This is one of the proteins that bind and probably mediate the attachment of the 5S RNA into the large ribosomal subunit, where it forms part of the central protuberance. The protein is Large ribosomal subunit protein uL18 of Polynucleobacter necessarius subsp. necessarius (strain STIR1).